Consider the following 582-residue polypeptide: WD repeat-containing protein JIP5 (582 aa).

WD repeat units lie at residues 27–68 (KYPE…EAQS), 125–168 (RHKG…VLSK), 177–216 (DKNDAITKLVHSTSHPFLLSGTENGDVLVYDSNNMASNQL), 265–310 (DQED…LMDQ), and 373–410 (GPADEVGILDIDYDYRLISAGMDSLKIWSNQEETLNSD). Disordered regions lie at residues 405 to 496 (ETLN…DTEL) and 531 to 582 (TKEQ…FDDL). Composition is skewed to acidic residues over residues 410–438 (DSDDSDSDDSDSDIGSNDSEDSDSDDDDV) and 447–485 (EVNDFSPDSDSETGNDDSDENLEDVADSDSNEDQIENVT). Basic and acidic residues-rich tracts occupy residues 531–540 (TKEQSTKKAD) and 570–582 (QKHEHGIRRFDDL).

Belongs to the WD repeat WDR55 family.

Its subcellular location is the nucleus. It is found in the nucleolus. The chain is WD repeat-containing protein JIP5 (JIP5) from Debaryomyces hansenii (strain ATCC 36239 / CBS 767 / BCRC 21394 / JCM 1990 / NBRC 0083 / IGC 2968) (Yeast).